The following is a 646-amino-acid chain: Type I inositol polyphosphate 5-phosphatase 2 (646 aa).

Basic and acidic residues predominate over residues 59–74 (TDEDSHNGRRGSEADH). Disordered regions lie at residues 59 to 99 (TDED…GKSE), 185 to 207 (ESVY…SAPS), and 329 to 369 (IDNR…IRNS). Over residues 188–207 (YDQSPSCNNNALHRSHSAPS) the composition is skewed to polar residues. The segment covering 341 to 350 (EAAKIMHDDS) has biased composition (basic and acidic residues). 2 catalytic regions span residues 495-510 (DQVF…LNMS) and 575-590 (KKRA…WLGK).

The protein belongs to the inositol polyphosphate 5-phosphatase family. In terms of tissue distribution, expressed ubiquitously.

It catalyses the reaction 1D-myo-inositol 1,4,5-trisphosphate + H2O = 1D-myo-inositol 1,4-bisphosphate + phosphate. It carries out the reaction 1D-myo-inositol 1,3,4,5-tetrakisphosphate + H2O = 1D-myo-inositol 1,3,4-trisphosphate + phosphate. Functionally, has phosphatase activity toward Ins(1,4,5)P3 and Ins(1,3,4,5)P4. Seems to be involved in the abscisic acid (ABA) signaling pathway. Could also be able to hydrolyze PtdIns(4,5)P2 and PtdIns(3,4,5)P3. In Arabidopsis thaliana (Mouse-ear cress), this protein is Type I inositol polyphosphate 5-phosphatase 2.